Here is a 72-residue protein sequence, read N- to C-terminus: Enterobactin biosynthesis protein YbdZ (72 aa).

Belongs to the MbtH-like family.

Functionally, involved in the biosynthesis of the siderophore enterobactin (enterochelin), which is a macrocyclic trimeric lactone of N-(2,3-dihydroxybenzoyl)-serine. Plays a role in the catalytic function of EntF. It is required for adenylation of amino acids in non-ribosomal peptide biosynthesis. The sequence is that of Enterobactin biosynthesis protein YbdZ from Escherichia coli (strain K12).